Reading from the N-terminus, the 283-residue chain is Thymidylate synthase (283 aa).

Arginine 22 contributes to the dUMP binding site. Residue cysteine 160 is the Nucleophile of the active site. DUMP is bound by residues 180 to 183 (RSCD), asparagine 191, and 221 to 223 (HIY). Residue aspartate 183 participates in (6R)-5,10-methylene-5,6,7,8-tetrahydrofolate binding. Serine 282 provides a ligand contact to (6R)-5,10-methylene-5,6,7,8-tetrahydrofolate.

The protein belongs to the thymidylate synthase family. Bacterial-type ThyA subfamily. As to quaternary structure, homodimer.

The protein localises to the cytoplasm. The enzyme catalyses dUMP + (6R)-5,10-methylene-5,6,7,8-tetrahydrofolate = 7,8-dihydrofolate + dTMP. Its pathway is pyrimidine metabolism; dTTP biosynthesis. In terms of biological role, catalyzes the reductive methylation of 2'-deoxyuridine-5'-monophosphate (dUMP) to 2'-deoxythymidine-5'-monophosphate (dTMP) while utilizing 5,10-methylenetetrahydrofolate (mTHF) as the methyl donor and reductant in the reaction, yielding dihydrofolate (DHF) as a by-product. This enzymatic reaction provides an intracellular de novo source of dTMP, an essential precursor for DNA biosynthesis. In Haemophilus influenzae (strain ATCC 51907 / DSM 11121 / KW20 / Rd), this protein is Thymidylate synthase.